We begin with the raw amino-acid sequence, 417 residues long: Probable cysteine desulfurase (417 aa).

The residue at position 233 (Lys-233) is an N6-(pyridoxal phosphate)lysine. The active-site Cysteine persulfide intermediate is the Cys-373.

Belongs to the class-V pyridoxal-phosphate-dependent aminotransferase family. Csd subfamily. Requires pyridoxal 5'-phosphate as cofactor.

It carries out the reaction (sulfur carrier)-H + L-cysteine = (sulfur carrier)-SH + L-alanine. Catalyzes the removal of elemental sulfur and selenium atoms from L-cysteine, L-cystine, L-selenocysteine, and L-selenocystine to produce L-alanine. The protein is Probable cysteine desulfurase (csd) of Mycobacterium tuberculosis (strain CDC 1551 / Oshkosh).